We begin with the raw amino-acid sequence, 437 residues long: Transcription factor AP-2-alpha (437 aa).

K10 participates in a covalent cross-link: Glycyl lysine isopeptide (Lys-Gly) (interchain with G-Cter in SUMO); alternate. Residue K10 forms a Glycyl lysine isopeptide (Lys-Gly) (interchain with G-Cter in SUMO2); alternate linkage. A disordered region spans residues 14–107 (CEDRHDGTSN…GQRQSQESGL (94 aa)). The PPxY motif motif lies at 57–62 (YFPPPY). Low complexity-rich tracts occupy residues 65–74 (IYPQSQDPYS) and 88–101 (QPQP…GQRQ). Glycyl lysine isopeptide (Lys-Gly) (interchain with G-Cter in SUMO2) cross-links involve residues K177 and K184. Phosphoserine; by PKA is present on S239. Positions 280 to 410 (RRKAANVTLL…YLTEALKAMD (131 aa)) are H-S-H (helix-span-helix), dimerization. A compositionally biased stretch (polar residues) spans 414–427 (LSNNPNSHTDNSAK). A disordered region spans residues 414-437 (LSNNPNSHTDNSAKSSDKEEKHRK). Residues 428–437 (SSDKEEKHRK) are compositionally biased toward basic and acidic residues.

It belongs to the AP-2 family. In terms of assembly, binds DNA as a dimer. Can form homodimers or heterodimers with other AP-2 family members. Interacts with WWOX. Interacts with UBE2I. Interacts with RALBP1 in a complex also containing EPN1 and NUMB during interphase and mitosis. Interacts with CITED4. Interacts with KCTD1; this interaction represses transcription activation. Interacts (via C-terminus) with CITED2 (via C-terminus); the interaction stimulates TFAP2A-transcriptional activation. Interacts (via N-terminus) with EP300 (via N-terminus); the interaction requires CITED2. Interacts with KCTD15; this interaction inhibits TFAP2A transcriptional activation. Sumoylated on Lys-10; which inhibits transcriptional activity.

The protein resides in the nucleus. Functionally, sequence-specific DNA-binding protein that interacts with inducible viral and cellular enhancer elements to regulate transcription of selected genes. AP-2 factors bind to the consensus sequence 5'-GCCNNNGGC-3' and activate genes involved in a large spectrum of important biological functions including proper eye, face, body wall, limb and neural tube development. They also suppress a number of genes including MCAM/MUC18, C/EBP alpha and MYC. AP-2-alpha is the only AP-2 protein required for early morphogenesis of the lens vesicle. Together with the CITED2 coactivator, stimulates the PITX2 P1 promoter transcription activation. Associates with chromatin to the PITX2 P1 promoter region. This Mus musculus (Mouse) protein is Transcription factor AP-2-alpha (Tfap2a).